The sequence spans 150 residues: 3-hydroxyacyl-[acyl-carrier-protein] dehydratase FabZ (150 aa).

Residue histidine 54 is part of the active site.

Belongs to the thioester dehydratase family. FabZ subfamily.

It is found in the cytoplasm. It carries out the reaction a (3R)-hydroxyacyl-[ACP] = a (2E)-enoyl-[ACP] + H2O. Its function is as follows. Involved in unsaturated fatty acids biosynthesis. Catalyzes the dehydration of short chain beta-hydroxyacyl-ACPs and long chain saturated and unsaturated beta-hydroxyacyl-ACPs. The protein is 3-hydroxyacyl-[acyl-carrier-protein] dehydratase FabZ of Vibrio vulnificus (strain CMCP6).